The following is a 125-amino-acid chain: Large ribosomal subunit protein bL12 (125 aa).

This sequence belongs to the bacterial ribosomal protein bL12 family. Homodimer. Part of the ribosomal stalk of the 50S ribosomal subunit. Forms a multimeric L10(L12)X complex, where L10 forms an elongated spine to which 2 to 4 L12 dimers bind in a sequential fashion. Binds GTP-bound translation factors.

Forms part of the ribosomal stalk which helps the ribosome interact with GTP-bound translation factors. Is thus essential for accurate translation. The protein is Large ribosomal subunit protein bL12 of Cereibacter sphaeroides (Rhodobacter sphaeroides).